Reading from the N-terminus, the 362-residue chain is Oxygen-dependent coproporphyrinogen-III oxidase (362 aa).

Residue serine 118 participates in substrate binding. Positions 122 and 132 each coordinate a divalent metal cation. The active-site Proton donor is histidine 132. Position 134 to 136 (134 to 136 (NYR)) interacts with substrate. Residues histidine 166 and histidine 196 each coordinate a divalent metal cation. Residues 286–321 (YVEFNLVWDRGTIFGLQTNGRTESILMSLPPLVRWE) are important for dimerization.

It belongs to the aerobic coproporphyrinogen-III oxidase family. Homodimer. A divalent metal cation serves as cofactor.

It localises to the cytoplasm. The enzyme catalyses coproporphyrinogen III + O2 + 2 H(+) = protoporphyrinogen IX + 2 CO2 + 2 H2O. Its pathway is porphyrin-containing compound metabolism; protoporphyrin-IX biosynthesis; protoporphyrinogen-IX from coproporphyrinogen-III (O2 route): step 1/1. In terms of biological role, involved in the heme and chlorophyll biosynthesis. Catalyzes the aerobic oxidative decarboxylation of propionate groups of rings A and B of coproporphyrinogen-III to yield the vinyl groups in protoporphyrinogen-IX. The protein is Oxygen-dependent coproporphyrinogen-III oxidase of Synechococcus sp. (strain CC9605).